Here is a 184-residue protein sequence, read N- to C-terminus: Large ribosomal subunit protein uL5 (184 aa).

It belongs to the universal ribosomal protein uL5 family. As to quaternary structure, part of the 50S ribosomal subunit; part of the 5S rRNA/L5/L18/L25 subcomplex. Contacts the 5S rRNA and the P site tRNA. Forms a bridge to the 30S subunit in the 70S ribosome.

Its function is as follows. This is one of the proteins that bind and probably mediate the attachment of the 5S RNA into the large ribosomal subunit, where it forms part of the central protuberance. In the 70S ribosome it contacts protein S13 of the 30S subunit (bridge B1b), connecting the 2 subunits; this bridge is implicated in subunit movement. Contacts the P site tRNA; the 5S rRNA and some of its associated proteins might help stabilize positioning of ribosome-bound tRNAs. The polypeptide is Large ribosomal subunit protein uL5 (Ureaplasma urealyticum serovar 10 (strain ATCC 33699 / Western)).